Reading from the N-terminus, the 376-residue chain is Pyrimidine monooxygenase RutA (376 aa).

Residues 61–62 (IK), asparagine 127, glutamate 136, 152–153 (RY), and serine 202 contribute to the FMN site.

The protein belongs to the NtaA/SnaA/DszA monooxygenase family. RutA subfamily.

It catalyses the reaction uracil + FMNH2 + NADH + O2 = (Z)-3-ureidoacrylate + FMN + NAD(+) + H2O + H(+). The enzyme catalyses thymine + FMNH2 + NADH + O2 = (Z)-2-methylureidoacrylate + FMN + NAD(+) + H2O + H(+). Functionally, catalyzes the pyrimidine ring opening between N-3 and C-4 by an unusual flavin hydroperoxide-catalyzed mechanism, adding oxygen atoms in the process to yield ureidoacrylate peracid, that immediately reacts with FMN forming ureidoacrylate and FMN-N(5)-oxide. The FMN-N(5)-oxide reacts spontaneously with NADH to produce FMN. Requires the flavin reductase RutF to regenerate FMN in vivo. The polypeptide is Pyrimidine monooxygenase RutA (Methylorubrum populi (strain ATCC BAA-705 / NCIMB 13946 / BJ001) (Methylobacterium populi)).